The following is a 328-amino-acid chain: NADH:quinone reductase (328 aa).

FMN contacts are provided by residues 22-24 (GMQ), Thr75, Lys124, Ala150, 178-180 (SGG), and 201-202 (GT).

The protein belongs to the nitronate monooxygenase family. In terms of assembly, monomer. Requires FMN as cofactor.

It carries out the reaction a quinone + NADH + H(+) = a quinol + NAD(+). Its function is as follows. Catalyzes the NADH-dependent reduction of a broad spectrum of quinone substrates, generating the corresponding hydroquinones. Highly prefers NADH to NADPH as a reducing substrate. Also displays a small NADH oxidase activity. Does not exhibit nitronate monooxygenase activity; is inactive against propionate 3-nitronate, 3-nitropropionate, nitroethane, 1-nitropropane, 2-nitropropane, and the anionic forms ethylnitronate, propyl-1-nitronate, and propyl-2-nitronate. Has no azoreductase activity since it is not able to reduce the azo dye methyl red with NADH. May be required to maintain an appropriate [NAD(+)]/[NADH] ratio for the catabolism of fatty acids in P.aeruginosa PAO1. In Pseudomonas aeruginosa (strain ATCC 15692 / DSM 22644 / CIP 104116 / JCM 14847 / LMG 12228 / 1C / PRS 101 / PAO1), this protein is NADH:quinone reductase.